Consider the following 872-residue polypeptide: MKQLTSAQIRQMWLDFWKSKGHAVEPSANLVPVNDPTLLWINSGVATLKKYFDGSVIPENPRITNSQKAIRTNDIENVGKTARHHTMFEMLGNFSVGDYFRDEAIEWGYELLTSPEWFDLPKDKLYMTYYPDDKDSYNRWIACGVEPSHLIPIEDNFWEIGAGPSGPDTEIFFDRGEEFDPDNIGIRLLEEDIENDRYIEIWNIVLSQFNADPAVPRSEYKELPNKNIDTGAGLERLAAVMQGAKTNFETDLFMPIIREIEKMSGKAYDPDGETLSFKVIADHIRSLAFAIGDGALPGNEGRGYVLRRLLRRAVMHGRRLGISDAFLYKLVPTVGQIMESYYPEVLEKRDFIEKIVKREEETFARTIDAGSSMLDELLANLKKSGKDTLEGKDIFKLYDTYGFPVELTEELAEDEGFKIDHEGFKAAMKEQQDRARASVVKGGSMGMQNETLANITEPSEFLYEAETAESRLSVIVADDARHDSVNSGQALLVFEQTPFYAEMGGQVADHGTISDAAGTTVARVVDVQRAPNGQALHTVEVEGELVVGANYKLEIDHSRRHRVMKNHTATHLLHAALHNIVGNHAVQAGSLNEQEFLRFDFTHFEAVTPEELRAIEEQVNEEIWKATPVTTIETDIDTAKSMGAMALFGEKYGKRVRVVSIGDYSVELCGGTHVANTAEIGMFKIIKEEGIGSGTRRILAVTSREAYLAYREEEDALKSIAATLKAPQLKEVPNKVASLQEQLHALQKENATLKEKAAAAAAGDVFKDVKEANGVRYIASQVEVSDAGALRTFADQWKQADYSDVLVLAAHIREKVNVLVASKSENVHAGNLIKVLAPIVSGRGGGKPDMAMAGGSDANSIQDLLSAVAEQF.

The Zn(2+) site is built by H567, H571, C669, and H673.

It belongs to the class-II aminoacyl-tRNA synthetase family. The cofactor is Zn(2+).

The protein resides in the cytoplasm. The enzyme catalyses tRNA(Ala) + L-alanine + ATP = L-alanyl-tRNA(Ala) + AMP + diphosphate. In terms of biological role, catalyzes the attachment of alanine to tRNA(Ala) in a two-step reaction: alanine is first activated by ATP to form Ala-AMP and then transferred to the acceptor end of tRNA(Ala). Also edits incorrectly charged Ser-tRNA(Ala) and Gly-tRNA(Ala) via its editing domain. The chain is Alanine--tRNA ligase from Streptococcus thermophilus (strain CNRZ 1066).